The chain runs to 450 residues: tRNA modification GTPase MnmE (450 aa).

3 residues coordinate (6S)-5-formyl-5,6,7,8-tetrahydrofolate: Arg-23, Glu-80, and Arg-123. A TrmE-type G domain is found at 219 to 372 (GLHVVLAGQP…LRARLLQMAG (154 aa)). Asn-229 contacts K(+). GTP is bound by residues 229–234 (NVGKSS), 248–254 (TPIAGTT), and 273–276 (DTAG). Ser-233 serves as a coordination point for Mg(2+). Residues Thr-248, Ile-250, and Thr-253 each contribute to the K(+) site. Mg(2+) is bound at residue Thr-254. (6S)-5-formyl-5,6,7,8-tetrahydrofolate is bound at residue Lys-450.

Belongs to the TRAFAC class TrmE-Era-EngA-EngB-Septin-like GTPase superfamily. TrmE GTPase family. Homodimer. Heterotetramer of two MnmE and two MnmG subunits. K(+) is required as a cofactor.

It localises to the cytoplasm. Its function is as follows. Exhibits a very high intrinsic GTPase hydrolysis rate. Involved in the addition of a carboxymethylaminomethyl (cmnm) group at the wobble position (U34) of certain tRNAs, forming tRNA-cmnm(5)s(2)U34. This Bordetella avium (strain 197N) protein is tRNA modification GTPase MnmE.